The primary structure comprises 435 residues: Elongation factor 1-alpha (435 aa).

Residues 5 to 226 (KTHINLVVIG…DTMEPPKRPT (222 aa)) enclose the tr-type G domain. A G1 region spans residues 14-21 (GHVDSGKS). 14–21 (GHVDSGKS) lines the GTP pocket. Residues 70–74 (GITID) form a G2 region. The G3 stretch occupies residues 91 to 94 (DAPG). GTP contacts are provided by residues 91 to 95 (DAPGH) and 151 to 154 (NKMD). The G4 stretch occupies residues 151-154 (NKMD). The tract at residues 190–192 (SGF) is G5.

The protein belongs to the TRAFAC class translation factor GTPase superfamily. Classic translation factor GTPase family. EF-Tu/EF-1A subfamily.

The protein localises to the cytoplasm. Functionally, this protein promotes the GTP-dependent binding of aminoacyl-tRNA to the A-site of ribosomes during protein biosynthesis. The chain is Elongation factor 1-alpha from Cryptosporidium parvum.